Consider the following 558-residue polypeptide: Dihydroxy-acid dehydratase (558 aa).

Residue Asp-81 coordinates Mg(2+). Cys-122 provides a ligand contact to [2Fe-2S] cluster. Mg(2+) is bound by residues Asp-123 and Lys-124. Lys-124 carries the post-translational modification N6-carboxylysine. Cys-195 provides a ligand contact to [2Fe-2S] cluster. Glu-447 contributes to the Mg(2+) binding site. The active-site Proton acceptor is Ser-473.

The protein belongs to the IlvD/Edd family. Homodimer. The cofactor is [2Fe-2S] cluster. It depends on Mg(2+) as a cofactor.

It carries out the reaction (2R)-2,3-dihydroxy-3-methylbutanoate = 3-methyl-2-oxobutanoate + H2O. The catalysed reaction is (2R,3R)-2,3-dihydroxy-3-methylpentanoate = (S)-3-methyl-2-oxopentanoate + H2O. It participates in amino-acid biosynthesis; L-isoleucine biosynthesis; L-isoleucine from 2-oxobutanoate: step 3/4. Its pathway is amino-acid biosynthesis; L-valine biosynthesis; L-valine from pyruvate: step 3/4. Functionally, functions in the biosynthesis of branched-chain amino acids. Catalyzes the dehydration of (2R,3R)-2,3-dihydroxy-3-methylpentanoate (2,3-dihydroxy-3-methylvalerate) into 2-oxo-3-methylpentanoate (2-oxo-3-methylvalerate) and of (2R)-2,3-dihydroxy-3-methylbutanoate (2,3-dihydroxyisovalerate) into 2-oxo-3-methylbutanoate (2-oxoisovalerate), the penultimate precursor to L-isoleucine and L-valine, respectively. The polypeptide is Dihydroxy-acid dehydratase (Bacillus subtilis (strain 168)).